The primary structure comprises 503 residues: Legumin J (503 aa).

An N-terminal signal peptide occupies residues 1 to 22 (MSKPFLSLLSLSLLLFASACLA). 2 disulfides stabilise this stretch: Cys33–Cys66 and Cys109–Cys329. One can recognise a Cupin type-1 1 domain in the interval 38 to 257 (INALEPDHRV…TFNTEEDTAK (220 aa)). Disordered stretches follow at residues 111–140 (ETYE…RRFR), 185–235 (FYLG…EGNS), and 253–323 (EDTA…RKNG). Residues 118-129 (SSQSRQESRQQQ) show a composition bias toward low complexity. 2 stretches are compositionally biased toward basic and acidic residues: residues 254 to 268 (DTAK…ERSQ) and 282 to 300 (KGKE…HREE). Residues 301–312 (KEEEEEEEEDEE) are compositionally biased toward acidic residues. The span at 313-323 (EKQRSEERKNG) shows a compositional bias: basic and acidic residues. One can recognise a Cupin type-1 2 domain in the interval 335-482 (ENIADAARAD…AFGLRQRQVT (148 aa)).

The protein belongs to the 11S seed storage protein (globulins) family. As to quaternary structure, hexamer; each subunit is composed of an acidic and a basic chain derived from a single precursor and linked by a disulfide bond.

This protein found in the seeds of many leguminous and non-leguminous plants is the source of sulfur-containing amino acids in seed meals. This is Legumin J (LEGJ) from Pisum sativum (Garden pea).